A 450-amino-acid chain; its full sequence is tRNA-2-methylthio-N(6)-dimethylallyladenosine synthase (450 aa).

The 121-residue stretch at 7–127 folds into the MTTase N-terminal domain; it reads KKVFIKTYGC…LPDVLARVRG (121 aa). [4Fe-4S] cluster contacts are provided by cysteine 16, cysteine 52, cysteine 90, cysteine 168, cysteine 172, and cysteine 175. Positions 154 to 388 constitute a Radical SAM core domain; sequence IKRGVTAFLT…LLLKQQQGFG (235 aa). In terms of domain architecture, TRAM spans 389-450; the sequence is SSLVGSTIDT…GYNSLFAELA (62 aa).

This sequence belongs to the methylthiotransferase family. MiaB subfamily. In terms of assembly, monomer. [4Fe-4S] cluster serves as cofactor.

It localises to the cytoplasm. It catalyses the reaction N(6)-dimethylallyladenosine(37) in tRNA + (sulfur carrier)-SH + AH2 + 2 S-adenosyl-L-methionine = 2-methylsulfanyl-N(6)-dimethylallyladenosine(37) in tRNA + (sulfur carrier)-H + 5'-deoxyadenosine + L-methionine + A + S-adenosyl-L-homocysteine + 2 H(+). Functionally, catalyzes the methylthiolation of N6-(dimethylallyl)adenosine (i(6)A), leading to the formation of 2-methylthio-N6-(dimethylallyl)adenosine (ms(2)i(6)A) at position 37 in tRNAs that read codons beginning with uridine. This Mesorhizobium japonicum (strain LMG 29417 / CECT 9101 / MAFF 303099) (Mesorhizobium loti (strain MAFF 303099)) protein is tRNA-2-methylthio-N(6)-dimethylallyladenosine synthase.